We begin with the raw amino-acid sequence, 66 residues long: Small archaeal modifier protein 2 (66 aa).

Residue Lys-58 forms a Glycyl lysine isopeptide (Lys-Gly) (interchain with G-Cter in SAMP2) linkage. Gly-66 carries the 1-thioglycine; alternate modification. Residue Gly-66 is modified to Glycyl adenylate; alternate. Gly-66 is covalently cross-linked (Glycyl lysine isopeptide (Gly-Lys) (interchain with K-? in acceptor proteins); alternate).

Monomer. Monomeric and polymeric forms interact with NcsA. In terms of processing, the C-terminal glycine is likely acyl-adenylated (-COAMP) by UbaA, and also probably thiocarboxylated (-COSH) to function in sulfur transfer.

In terms of biological role, functions as a protein modifier covalently attached to lysine residues of substrate proteins, as well as a sulfur carrier in tRNA thiolation. The protein modification process is termed sampylation and involves the formation of an isopeptide bond between the SAMP2 C-terminal glycine carboxylate and the epsilon-amino group of lysine residues on target proteins. Is able to form polymeric chains with itself at Lys-58, similar to ubiquitin and other ubiquitin-like proteins. May serve as a proteolytic signal in the cell to target proteins for degradation by proteasomes. The sequence is that of Small archaeal modifier protein 2 (samp2) from Haloferax volcanii (strain ATCC 29605 / DSM 3757 / JCM 8879 / NBRC 14742 / NCIMB 2012 / VKM B-1768 / DS2) (Halobacterium volcanii).